The sequence spans 282 residues: Bifunctional protein FolD (282 aa).

Residues 165-167 and I231 each bind NADP(+); that span reads GAS.

It belongs to the tetrahydrofolate dehydrogenase/cyclohydrolase family. Homodimer.

It carries out the reaction (6R)-5,10-methylene-5,6,7,8-tetrahydrofolate + NADP(+) = (6R)-5,10-methenyltetrahydrofolate + NADPH. The enzyme catalyses (6R)-5,10-methenyltetrahydrofolate + H2O = (6R)-10-formyltetrahydrofolate + H(+). Its pathway is one-carbon metabolism; tetrahydrofolate interconversion. In terms of biological role, catalyzes the oxidation of 5,10-methylenetetrahydrofolate to 5,10-methenyltetrahydrofolate and then the hydrolysis of 5,10-methenyltetrahydrofolate to 10-formyltetrahydrofolate. The polypeptide is Bifunctional protein FolD (Francisella tularensis subsp. mediasiatica (strain FSC147)).